The primary structure comprises 270 residues: ATP synthase subunit delta (270 aa).

Belongs to the ATPase delta chain family. F-type ATPases have 2 components, F(1) - the catalytic core - and F(0) - the membrane proton channel. F(1) has five subunits: alpha(3), beta(3), gamma(1), delta(1), epsilon(1). F(0) has three main subunits: a(1), b(2) and c(10-14). The alpha and beta chains form an alternating ring which encloses part of the gamma chain. F(1) is attached to F(0) by a central stalk formed by the gamma and epsilon chains, while a peripheral stalk is formed by the delta and b chains.

It is found in the cell membrane. F(1)F(0) ATP synthase produces ATP from ADP in the presence of a proton or sodium gradient. F-type ATPases consist of two structural domains, F(1) containing the extramembraneous catalytic core and F(0) containing the membrane proton channel, linked together by a central stalk and a peripheral stalk. During catalysis, ATP synthesis in the catalytic domain of F(1) is coupled via a rotary mechanism of the central stalk subunits to proton translocation. Its function is as follows. This protein is part of the stalk that links CF(0) to CF(1). It either transmits conformational changes from CF(0) to CF(1) or is implicated in proton conduction. This Kocuria rhizophila (strain ATCC 9341 / DSM 348 / NBRC 103217 / DC2201) protein is ATP synthase subunit delta.